The sequence spans 298 residues: MESQKEARILQEPVARPPGASRSQTPNAKERQEGGPVPAAAALGAEADDDSADRLWELPVEPAKRRPECSRCSRPQKVCLCPFLPAHPLHISTHLYIIQHPAEENKVLRTVPLLAACLPQDKCKVKIGRRFSEERDPELSTVCRKSGTLILYPGAEAANLEEFILDSPVYPSTIIIIDGTWSQAKDIFYKNSLFRHPKQVQLKTSISSQYVIRMQPTNRCLSTLECAAVALSILEKNNYIQETLLRPLQALCSFQLQHGAQIRLSKEHLLKNGLYTKPMPKNKRKLRKMELLMNSVKI.

Met-1 bears the N-acetylmethionine mark. The tract at residues 1-52 (MESQKEARILQEPVARPPGASRSQTPNAKERQEGGPVPAAAALGAEADDDSA) is disordered. Ser-132 carries the phosphoserine modification. Positions 178-181 (DGTW) match the DXTW motif.

The protein belongs to the TDD superfamily. DTWD2 family.

It localises to the nucleus. The protein resides in the cytoplasm. It carries out the reaction a uridine in tRNA + S-adenosyl-L-methionine = a 3-[(3S)-3-amino-3-carboxypropyl]uridine in tRNA + S-methyl-5'-thioadenosine + H(+). Catalyzes the formation of 3-(3-amino-3-carboxypropyl)uridine (acp3U) at position 20a in the D-loop of several cytoplasmic tRNAs (acp3U(20a)). Also has a weak activity to form acp3U at position 20 in the D-loop of tRNAs (acp3U(20)). Involved in glycoRNA biosynthesis by mediating formation of acp3U, which acts as an attachment site for N-glycans on tRNAs. GlycoRNAs consist of RNAs modified with secretory N-glycans that are presented on the cell surface. This chain is tRNA-uridine aminocarboxypropyltransferase 2, found in Macaca fascicularis (Crab-eating macaque).